The chain runs to 208 residues: Ribonuclease HII (208 aa).

The region spanning aspartate 13–alanine 202 is the RNase H type-2 domain. Aspartate 19, glutamate 20, and aspartate 111 together coordinate a divalent metal cation.

This sequence belongs to the RNase HII family. The cofactor is Mn(2+). Mg(2+) is required as a cofactor.

The protein resides in the cytoplasm. It catalyses the reaction Endonucleolytic cleavage to 5'-phosphomonoester.. Functionally, endonuclease that specifically degrades the RNA of RNA-DNA hybrids. This chain is Ribonuclease HII, found in Pseudomonas fluorescens (strain ATCC BAA-477 / NRRL B-23932 / Pf-5).